The chain runs to 215 residues: Large ribosomal subunit protein eL15 (215 aa).

A disordered region spans residues 179–215; sequence GTVKHKWKKKEKEREQKKRHEATKYYRLQNYDKLPGK. Positions 188–202 are enriched in basic and acidic residues; sequence KEKEREQKKRHEATK.

It belongs to the eukaryotic ribosomal protein eL15 family.

This chain is Large ribosomal subunit protein eL15, found in Sulfurisphaera tokodaii (strain DSM 16993 / JCM 10545 / NBRC 100140 / 7) (Sulfolobus tokodaii).